We begin with the raw amino-acid sequence, 200 residues long: Recombination protein RecR (200 aa).

The C4-type zinc finger occupies 58-73 (CQVCGNMDTENICGIC). The region spanning 81–176 (SVIAIVETVA…KISRLASGIP (96 aa)) is the Toprim domain.

This sequence belongs to the RecR family.

May play a role in DNA repair. It seems to be involved in an RecBC-independent recombinational process of DNA repair. It may act with RecF and RecO. In Rickettsia bellii (strain OSU 85-389), this protein is Recombination protein RecR.